Here is a 1050-residue protein sequence, read N- to C-terminus: uncharacterized protein (1050 aa).

Coiled-coil stretches lie at residues 1 to 420, 463 to 627, and 692 to 981; these read MEKV…TAKM, YSLL…IREL, and NDSK…NLLS.

This is an uncharacterized protein from Arabidopsis thaliana (Mouse-ear cress).